Reading from the N-terminus, the 383-residue chain is ATP phosphoribosyltransferase regulatory subunit (383 aa).

The protein belongs to the class-II aminoacyl-tRNA synthetase family. HisZ subfamily. In terms of assembly, heteromultimer composed of HisG and HisZ subunits.

It localises to the cytoplasm. The protein operates within amino-acid biosynthesis; L-histidine biosynthesis; L-histidine from 5-phospho-alpha-D-ribose 1-diphosphate: step 1/9. In terms of biological role, required for the first step of histidine biosynthesis. May allow the feedback regulation of ATP phosphoribosyltransferase activity by histidine. The chain is ATP phosphoribosyltransferase regulatory subunit from Neisseria gonorrhoeae (strain ATCC 700825 / FA 1090).